The primary structure comprises 352 residues: Protein Wnt-4a (352 aa).

The signal sequence occupies residues 1-22; that stretch reads MSSEYLIRSLLMLFLALFSANA. 11 disulfide bridges follow: cysteine 78/cysteine 89, cysteine 128/cysteine 136, cysteine 138/cysteine 155, cysteine 206/cysteine 220, cysteine 208/cysteine 215, cysteine 280/cysteine 312, cysteine 297/cysteine 307, cysteine 311/cysteine 351, cysteine 327/cysteine 342, cysteine 329/cysteine 339, and cysteine 334/cysteine 335. N-linked (GlcNAc...) asparagine glycosylation is present at asparagine 88. Serine 212 carries O-palmitoleoyl serine; by PORCN lipidation. Asparagine 298 is a glycosylation site (N-linked (GlcNAc...) asparagine).

Belongs to the Wnt family. In terms of processing, palmitoleoylation is required for efficient binding to frizzled receptors. Depalmitoleoylation leads to Wnt signaling pathway inhibition. In terms of tissue distribution, caudal forebrain and neural keel, the floor plate, the gill slit and the developing pronephros.

It localises to the secreted. It is found in the extracellular space. The protein resides in the extracellular matrix. In terms of biological role, ligand for members of the frizzled family of seven transmembrane receptors. Plays an important role in embryonic development. The protein is Protein Wnt-4a (wnt4a) of Danio rerio (Zebrafish).